Consider the following 547-residue polypeptide: Leiomodin-2 (547 aa).

Residues 1-47 (MSTFGYRRGLSKYESIDEDELLASLSAEELKELERELEDIEPDRNLP) are interaction with tropomyosin alpha. 3 interaction with actin regions span residues 1–161 (MSTF…SDNS), 162–497 (KPKI…KEIK), and 521–540 (AHEN…LKRV). A phosphoserine mark is found at serine 11, serine 15, and serine 24. Residues 16 to 41 (IDEDELLASLSAEELKELERELEDIE) are a coiled coil. Disordered regions lie at residues 91–162 (KVAE…DNSK) and 352–533 (MDKQ…RGSS). Acidic residues-rich tracts occupy residues 95 to 104 (DKEESEEELI) and 112 to 139 (VSEE…EEER). Residues 113 to 148 (SEEVYTEEEEEESQEEEEEEDSDEEERTIETAKGIN) are a coiled coil. Residues 149 to 160 (GTVNYDSVNSDN) are compositionally biased toward polar residues. Positions 352–367 (MDKQRQKRLQEQKQQE) are enriched in basic and acidic residues. At serine 400 the chain carries Phosphoserine. Positions 419–449 (ATPPPPPPPPPPPPPSSQRLPPPPPPPPPPL) are enriched in pro residues. Residues 465–475 (QQESAQRALQN) are compositionally biased toward polar residues. Residues 477–487 (QKKKKGKKVKK) show a composition bias toward basic residues. Over residues 494–512 (KEIKNSLRSVQEKKMEDSS) the composition is skewed to basic and acidic residues. A WH2 domain is found at 521-540 (AHENLMEAIRGSSIKQLKRV).

It belongs to the tropomodulin family. As to quaternary structure, can bind at least three actin monomers and thereby provides a nucleus for actin filament formation. Interacts (via N-terminus) with tropomyosin alpha (TPM1) (via N-terminus). May also interact with TPM2 (via N-terminus). Interacts with FLII. Specifically expressed in heart and skeletal muscles, with higher levels in heart (at protein level). Not expressed in other tissues.

It is found in the cytoplasm. The protein resides in the myofibril. It localises to the sarcomere. Its subcellular location is the m line. The protein localises to the cytoskeleton. In terms of biological role, mediates nucleation of actin filaments and thereby promotes actin polymerization. Plays a role in the regulation of actin filament length. Required for normal sarcomere organization in the heart, and for normal heart function. The polypeptide is Leiomodin-2 (LMOD2) (Homo sapiens (Human)).